A 156-amino-acid chain; its full sequence is Small ribosomal subunit protein uS7 (156 aa).

This sequence belongs to the universal ribosomal protein uS7 family. Part of the 30S ribosomal subunit. Contacts proteins S9 and S11.

In terms of biological role, one of the primary rRNA binding proteins, it binds directly to 16S rRNA where it nucleates assembly of the head domain of the 30S subunit. Is located at the subunit interface close to the decoding center, probably blocks exit of the E-site tRNA. In Acetivibrio thermocellus (strain ATCC 27405 / DSM 1237 / JCM 9322 / NBRC 103400 / NCIMB 10682 / NRRL B-4536 / VPI 7372) (Clostridium thermocellum), this protein is Small ribosomal subunit protein uS7.